The chain runs to 560 residues: Membrane protein insertase YidC (560 aa).

A run of 6 helical transmembrane segments spans residues 7–27 (NLIAAIVLSLSIIFGWQYFVV), 334–354 (AIDFGWFYIITKPVFYAMNFF), 357–377 (YVGNFGISILIVTVIIKLLMF), 431–451 (LPILVQIPVFFSIYKVLYVTI), 476–496 (LFGFLPFSPPSFLMIGAWPIL), and 522–542 (FMPLIFLVMFSSFPVGLLIYW).

This sequence belongs to the OXA1/ALB3/YidC family. Type 1 subfamily. Interacts with the Sec translocase complex via SecD. Specifically interacts with transmembrane segments of nascent integral membrane proteins during membrane integration.

It is found in the cell inner membrane. In terms of biological role, required for the insertion and/or proper folding and/or complex formation of integral membrane proteins into the membrane. Involved in integration of membrane proteins that insert both dependently and independently of the Sec translocase complex, as well as at least some lipoproteins. Aids folding of multispanning membrane proteins. The chain is Membrane protein insertase YidC from Rickettsia canadensis (strain McKiel).